We begin with the raw amino-acid sequence, 529 residues long: Acid-sensing ion channel 1C (529 aa).

Topologically, residues 1-51 (MTAMKGDSEDSIESMRPSNLQVFANNSTLHGMSHIFAYGHMTFRRFLWTLS) are cytoplasmic. Residues 52 to 68 (FMGSLGLLMYVCMDRVY) form a helical membrane-spanning segment. Residues 69–427 (YYFEFPHVTK…EKIEQKKAYE (359 aa)) are Extracellular-facing. N-linked (GlcNAc...) asparagine glycosylation is found at Asn-86, Asn-155, and Asn-161. 7 cysteine pairs are disulfide-bonded: Cys-95–Cys-196, Cys-174–Cys-181, Cys-292–Cys-367, Cys-310–Cys-363, Cys-314–Cys-361, Cys-323–Cys-345, and Cys-325–Cys-337. Asn-185 carries an N-linked (GlcNAc...) asparagine glycan. N-linked (GlcNAc...) asparagine glycosylation is found at Asn-368 and Asn-395. A discontinuously helical membrane pass occupies residues 428 to 458 (VAGLLGDIGGQMGLFIGASVLTILEIFDYLY). Positions 444-446 (GAS) match the GAS motif; ion selectivity filter motif. The Cytoplasmic segment spans residues 459–529 (EVLKDKILGS…PFVVGSNSGK (71 aa)).

It belongs to the amiloride-sensitive sodium channel (TC 1.A.6) family. ASIC1 subfamily. As to quaternary structure, homotrimer. Heterotrimer; with other ASIC proteins producing channel with different properties. Interacts with asic1a. In terms of tissue distribution, expressed in central nervous system.

Its subcellular location is the cell membrane. It localises to the postsynaptic cell membrane. The protein resides in the cell projection. The protein localises to the dendrite. It carries out the reaction Na(+)(in) = Na(+)(out). The enzyme catalyses K(+)(in) = K(+)(out). The catalysed reaction is Li(+)(in) = Li(+)(out). It catalyses the reaction Ca(2+)(in) = Ca(2+)(out). Inhibited by the diuretic drug amiloride. Functionally, forms voltage-independent, pH-gated trimeric sodium channels that act as postsynaptic excitatory receptors in the nervous system, playing a crucial role in regulating synaptic plasticity, learning, and memory. Upon extracellular pH drop this channel elicits transient, fast activating, and completely desensitizing inward currents. Displays high selectivity for sodium ions but can also permit the permeation of other cations. The chain is Acid-sensing ion channel 1C from Danio rerio (Zebrafish).